Reading from the N-terminus, the 418-residue chain is Gamma-glutamyl phosphate reductase (418 aa).

Belongs to the gamma-glutamyl phosphate reductase family.

The protein localises to the cytoplasm. The catalysed reaction is L-glutamate 5-semialdehyde + phosphate + NADP(+) = L-glutamyl 5-phosphate + NADPH + H(+). The protein operates within amino-acid biosynthesis; L-proline biosynthesis; L-glutamate 5-semialdehyde from L-glutamate: step 2/2. Its function is as follows. Catalyzes the NADPH-dependent reduction of L-glutamate 5-phosphate into L-glutamate 5-semialdehyde and phosphate. The product spontaneously undergoes cyclization to form 1-pyrroline-5-carboxylate. The polypeptide is Gamma-glutamyl phosphate reductase (Chlorobium limicola (strain DSM 245 / NBRC 103803 / 6330)).